Reading from the N-terminus, the 281-residue chain is Fibrinogen-like protein 1-like protein (281 aa).

Residues 1-33 (MGLQAGTRQLHGNLILLPVAVVMLLLCTSPVCA) form the signal peptide. The Fibrinogen C-terminal domain maps to 34–246 (TASVGLPADC…RPSSWSNPPM (213 aa)). 2 disulfides stabilise this stretch: cysteine 43/cysteine 69 and cysteine 201/cysteine 213. Residues 260 to 269 (PSRSPSLPSP) are compositionally biased toward low complexity. Positions 260-281 (PSRSPSLPSPITATHTVRNQLQ) are disordered. The segment covering 270–281 (ITATHTVRNQLQ) has biased composition (polar residues).

In terms of tissue distribution, expressed in smal intestine, colon and lung.

In terms of biological role, shows a cytidine deaminase activity on 2'-deoxycytidine (in vitro), however shows no RNA editing activity (in vitro). This is Fibrinogen-like protein 1-like protein from Gallus gallus (Chicken).